The following is a 502-amino-acid chain: Mannitol 2-dehydrogenase (502 aa).

37 to 48 (IVHVGVGGFHRA) is a binding site for NAD(+).

This sequence belongs to the mannitol dehydrogenase family. As to quaternary structure, monomer.

The catalysed reaction is D-mannitol + NAD(+) = D-fructose + NADH + H(+). Catalyzes the NAD(H)-dependent interconversion of D-fructose and D-mannitol in the mannitol metabolic pathway. This chain is Mannitol 2-dehydrogenase, found in Aspergillus terreus (strain NIH 2624 / FGSC A1156).